A 458-amino-acid polypeptide reads, in one-letter code: NADH-ubiquinone oxidoreductase chain 4 (458 aa).

Transmembrane regions (helical) follow at residues 21-43 (ASLW…QWLN), 58-78 (IDQI…LMLL), 93-112 (RTFI…AFSA), 116-138 (TLFY…RWGN), 145-165 (AGIY…VTIL), 196-216 (GLAL…HLWL), 224-244 (PIAG…YGIM), 257-277 (LSYP…SICL), 285-305 (LIAY…MIQT), 309-329 (FSGA…LFCL), 341-361 (ILLL…WWLL), and 379-399 (LTIM…TGLA).

Belongs to the complex I subunit 4 family.

The protein resides in the mitochondrion membrane. It carries out the reaction a ubiquinone + NADH + 5 H(+)(in) = a ubiquinol + NAD(+) + 4 H(+)(out). Core subunit of the mitochondrial membrane respiratory chain NADH dehydrogenase (Complex I) that is believed to belong to the minimal assembly required for catalysis. Complex I functions in the transfer of electrons from NADH to the respiratory chain. The immediate electron acceptor for the enzyme is believed to be ubiquinone. This Struthio camelus (Common ostrich) protein is NADH-ubiquinone oxidoreductase chain 4 (MT-ND4).